A 309-amino-acid chain; its full sequence is Glutaminase (309 aa).

Substrate contacts are provided by serine 64, asparagine 114, glutamate 160, asparagine 167, tyrosine 191, tyrosine 243, and valine 261.

It belongs to the glutaminase family. In terms of assembly, homotetramer.

The catalysed reaction is L-glutamine + H2O = L-glutamate + NH4(+). This is Glutaminase from Methylobacterium radiotolerans (strain ATCC 27329 / DSM 1819 / JCM 2831 / NBRC 15690 / NCIMB 10815 / 0-1).